Here is a 340-residue protein sequence, read N- to C-terminus: MKVKVAINGFGRIGRMVFRKAMLDDQIQVVAINASYSAETLAHLIKYDTIHGRYDKEVVAGEDSLIVNGKKVLLLNSRDPKQLPWREYDIDIVVEATGKFNAKDKAMGHIEAGAKKVILTAPGKNEDVTIVMGVNEDQFDAERHVIISNASCTTNCLAPVVKVLDEEFGIESGLMTTVHAYTNDQKNIDNPHKDLRRARACGESIIPTTTGAAKALSLVLPHLKGKLHGLALRVPVPNVSLVDLVVDLKTDVTAEEVNEAFKRAAKTSMYGVLDYSDEPLVSTDYNTNPHSAVIDGLTTMVMEDRKVKVLAWYDNEWGYSCRVVDLIRHVAARMKHPSAV.

NADP(+) contacts are provided by residues 12–13, arginine 78, and threonine 120; that span reads RI. Residues 151–153 and threonine 182 contribute to the D-glyceraldehyde 3-phosphate site; that span reads SCT. Catalysis depends on cysteine 152, which acts as the Nucleophile. Asparagine 183 contacts NADP(+). Residues arginine 197, 210–211, and arginine 233 contribute to the D-glyceraldehyde 3-phosphate site; that span reads TG. Position 315 (asparagine 315) interacts with NADP(+).

It belongs to the glyceraldehyde-3-phosphate dehydrogenase family. As to quaternary structure, homotetramer. Interacts with BrxC. Post-translationally, in response to oxidative stress, the active site Cys likely reacts with bacillithiol (BSH) to form mixed disulfides to protect the Cys residue against overoxidation. S-bacillithiolation presumably leads to loss of catalytic activity. Debacillithiolation by monothiol bacilliredoxin BrxC restores the activity.

The protein localises to the cytoplasm. It carries out the reaction D-glyceraldehyde 3-phosphate + phosphate + NADP(+) = (2R)-3-phospho-glyceroyl phosphate + NADPH + H(+). It catalyses the reaction D-glyceraldehyde 3-phosphate + phosphate + NAD(+) = (2R)-3-phospho-glyceroyl phosphate + NADH + H(+). It functions in the pathway carbohydrate biosynthesis; gluconeogenesis. In terms of biological role, involved in the gluconeogenesis. Catalyzes the oxidative phosphorylation of glyceraldehyde 3-phosphate (G3P) to 1,3-bisphosphoglycerate (BPG) using the cofactor NADP. The first reaction step involves the formation of a hemiacetal intermediate between G3P and a cysteine residue, and this hemiacetal intermediate is then oxidized to a thioester, with concomitant reduction of NADP to NADPH. The reduced NADPH is then exchanged with the second NADP, and the thioester is attacked by a nucleophilic inorganic phosphate to produce BPG. The protein is Glyceraldehyde-3-phosphate dehydrogenase 2 of Bacillus subtilis (strain 168).